The chain runs to 122 residues: Small ribosomal subunit protein bS16 (122 aa).

The interval V87–A122 is disordered.

This sequence belongs to the bacterial ribosomal protein bS16 family.

The chain is Small ribosomal subunit protein bS16 from Prochlorococcus marinus (strain MIT 9303).